The sequence spans 185 residues: Protein E3 homolog (185 aa).

The Z-binding domain occupies 7-73; sequence TVNDAEIFSL…SNPPKWFKNY (67 aa). The 68-residue stretch at 112–179 folds into the DRBM domain; the sequence is NPCIVLNEYC…SKITMDEILD (68 aa).

This sequence belongs to the poxviridae E3 protein family.

In terms of biological role, RNA-binding protein that plays a role in the inhibition of multiple cellular antiviral responses activated by double-stranded RNA (dsRNA), such as inhibition of PKR activation, necroptosis, and IFN-mediated antiviral activities. Recognizes and binds Z-RNA structures via its Z-binding domain and dsRNA via its DRBM domain: RNA-binding activity is required to escape host ZBP1-dependent necroptosis. Mechanistically, the Z-binding domain binds Z-RNAs that are produced during Yaba-like disease virus infection, thereby competing with Z-RNA detection by host ZBP1, suppressing ZBP1-dependent necroptosis. The protein is Protein E3 homolog of Yaba-like disease virus (YLDV).